A 519-amino-acid chain; its full sequence is Ribonuclease Y (519 aa).

A helical membrane pass occupies residues 3–23 (LIEIVLLLVGMAVGAATGFIL). The KH domain occupies 209–272 (TVTAVSLPSE…QIAKMALERL (64 aa)). The 94-residue stretch at 335–428 (VLQHSMEVAS…VQAADSLSGA (94 aa)) folds into the HD domain.

It belongs to the RNase Y family.

It localises to the cell membrane. Functionally, endoribonuclease that initiates mRNA decay. The sequence is that of Ribonuclease Y from Oleidesulfovibrio alaskensis (strain ATCC BAA-1058 / DSM 17464 / G20) (Desulfovibrio alaskensis).